Consider the following 330-residue polypeptide: Olfactory receptor 11H6 (330 aa).

Over 1–43 the chain is Extracellular; the sequence is MFFIIHSLVTSVFLTALGPQNRTMHFVTEFVLLGFHGQREMQS. Asparagine 21 is a glycosylation site (N-linked (GlcNAc...) asparagine). A helical membrane pass occupies residues 44–64; sequence CFFSFILVLYLLTLLGNGAIV. Over 65 to 72 the chain is Cytoplasmic; it reads CAVKLDRR. The chain crosses the membrane as a helical span at residues 73-93; that stretch reads LHTPMYILLGNFAFLEIWYIS. Residues 94–117 lie on the Extracellular side of the membrane; the sequence is STVPNMLVNILSEIKTISFSGCFL. Cysteine 115 and cysteine 207 are joined by a disulfide. A helical transmembrane segment spans residues 118 to 138; it reads QFYFFFSLGTTECFFLSVMAY. Residues 139-157 lie on the Cytoplasmic side of the membrane; sequence DRYLAICRPLHYPSIMTGK. Residues 158–178 traverse the membrane as a helical segment; sequence FCIILVCVCWVGGFLCYPVPI. At 179-215 the chain is on the extracellular side; the sequence is VLISQLPFCGPNIIDHLVCDPGPLFALACISAPSTEL. The chain crosses the membrane as a helical span at residues 216–235; sequence ICYTFNSMIIFGPFLSILGS. Residues 236 to 255 lie on the Cytoplasmic side of the membrane; the sequence is YTLVIRAVLCIPSGAGRTKA. Residues 256-276 traverse the membrane as a helical segment; it reads FSTCGSHLMVVSLFYGTLMVM. Topologically, residues 277–289 are extracellular; that stretch reads YVSPTSGNPAGMQ. The chain crosses the membrane as a helical span at residues 290-310; that stretch reads KIITLVYTAMTPFLNPLIYSL. Over 311 to 330 the chain is Cytoplasmic; sequence RNKDMKDALKRVLGLTVSQN.

It belongs to the G-protein coupled receptor 1 family.

Its subcellular location is the cell membrane. In terms of biological role, odorant receptor. The chain is Olfactory receptor 11H6 (OR11H6) from Homo sapiens (Human).